Here is an 818-residue protein sequence, read N- to C-terminus: Patatin-like phospholipase domain-containing protein YALI0D16379g (818 aa).

2 disordered regions span residues 1–50 (MLKL…RDVN) and 154–178 (EEKRRRGKSKKDKEGSEGDKTKTKE). The span at 22 to 38 (SQQLTLDSPEGSETSSR) shows a compositional bias: polar residues. The segment covering 164-178 (KDKEGSEGDKTKTKE) has biased composition (basic and acidic residues). A helical transmembrane segment spans residues 223-243 (WPALFFIGMWLLFLTTIYASV). Positions 398–589 (LCLSGGGCFA…RTDIPVDALN (192 aa)) constitute a PNPLA domain. The GXSXG motif lies at 429-433 (GTSGG). Serine 431 acts as the Nucleophile in catalysis. Residue aspartate 576 is the Proton acceptor of the active site. The disordered stretch occupies residues 781 to 805 (AGTDISSSNSDYDHEPQWEMDEGDS).

This sequence belongs to the PLPL family.

The protein localises to the membrane. In terms of biological role, probable lipid hydrolase. The protein is Patatin-like phospholipase domain-containing protein YALI0D16379g of Yarrowia lipolytica (strain CLIB 122 / E 150) (Yeast).